The sequence spans 916 residues: Calcium homeostasis endoplasmic reticulum protein (916 aa).

At methionine 1 the chain carries N-acetylmethionine. The SURP motif repeat unit spans residues 15 to 57 (VIDKLAQFVARNGPEFEKMTMEKQKDNPKFSFLFGGEFYSYYK). Lysine 18 carries the post-translational modification N6-acetyllysine. The 141-residue stretch at 149-289 (ETQLDMNEFD…QLQSPALGLG (141 aa)) folds into the CID domain. Disordered stretches follow at residues 336 to 549 (QQQQ…RFPP) and 601 to 635 (HPPW…PHIN). Positions 354–374 (TPPPPAPPPAPAPAPAIPPTT) are enriched in pro residues. The span at 480–501 (WNNQPDAAWNSQFEGPWNSQHE) shows a compositional bias: polar residues. Pro residues predominate over residues 525–541 (PFPPHQQHPQFNQPPHP). Tyrosine 714 is subject to Phosphotyrosine. The segment at 722–878 (RARRRKGQEK…DPIKGGDVRD (157 aa)) is disordered. The segment covering 739–749 (SRSRSKSRGRS) has biased composition (basic residues). The segment covering 750-766 (SSRSNSRSSKSSGSYSR) has biased composition (low complexity). Positions 767–815 (SRSRSCSRSYSRSRSRSRSRSRSSRSRSRSQSRSRSKSYSPGRRRRSRS) are enriched in basic residues. 3 positions are modified to phosphoserine: serine 813, serine 815, and serine 817. Threonine 819 is subject to Phosphothreonine. The residue at position 828 (serine 828) is a Phosphoserine. A G-patch domain is found at 841 to 891 (EENKGHQMLVKMGWSGSGGLGAKEQGIQDPIKGGDVRDKWDQYKGVGVALD). Lysine 844 participates in a covalent cross-link: Glycyl lysine isopeptide (Lys-Gly) (interchain with G-Cter in SUMO2). Serine 855 and serine 857 each carry phosphoserine. Lysine 872 participates in a covalent cross-link: Glycyl lysine isopeptide (Lys-Gly) (interchain with G-Cter in SUMO2). Lysine 879 carries the post-translational modification N6-acetyllysine. Serine 904 is subject to Phosphoserine.

In terms of tissue distribution, expressed in brain, placenta, lung, liver, kidney, pancreas, cardiac and skeletal muscle, and in cultured HEL and Dami cells.

Its subcellular location is the cytoplasm. The protein resides in the perinuclear region. The protein localises to the endoplasmic reticulum. Involved in calcium homeostasis, growth and proliferation. The polypeptide is Calcium homeostasis endoplasmic reticulum protein (Homo sapiens (Human)).